Reading from the N-terminus, the 171-residue chain is S-ribosylhomocysteine lyase (171 aa).

Residues His54, His58, and Cys128 each contribute to the Fe cation site.

It belongs to the LuxS family. In terms of assembly, homodimer. The cofactor is Fe cation.

The catalysed reaction is S-(5-deoxy-D-ribos-5-yl)-L-homocysteine = (S)-4,5-dihydroxypentane-2,3-dione + L-homocysteine. Involved in the synthesis of autoinducer 2 (AI-2) which is secreted by bacteria and is used to communicate both the cell density and the metabolic potential of the environment. The regulation of gene expression in response to changes in cell density is called quorum sensing. Catalyzes the transformation of S-ribosylhomocysteine (RHC) to homocysteine (HC) and 4,5-dihydroxy-2,3-pentadione (DPD). The polypeptide is S-ribosylhomocysteine lyase (Salmonella arizonae (strain ATCC BAA-731 / CDC346-86 / RSK2980)).